Reading from the N-terminus, the 310-residue chain is GPN-loop GTPase 2 (310 aa).

Ala2 is modified (N-acetylalanine). 19–24 (GSGKTT) serves as a coordination point for GTP. The Gly-Pro-Asn (GPN)-loop; involved in dimer interface motif lies at 76 to 78 (GPN). 178-181 (SKMD) contributes to the GTP binding site.

Belongs to the GPN-loop GTPase family. In terms of assembly, heterodimers with GPN1 or GPN3. Binds to RNA polymerase II (RNAPII).

Its function is as follows. Small GTPase required for proper localization of RNA polymerase II and III (RNAPII and RNAPIII). May act at an RNAP assembly step prior to nuclear import. This chain is GPN-loop GTPase 2, found in Mus musculus (Mouse).